The following is a 294-amino-acid chain: Small ribosomal subunit biogenesis GTPase RsgA 2, mitochondrial (294 aa).

A mitochondrion-targeting transit peptide spans 1–68; that stretch reads MQTFSSAAAL…RSFLAPVLPL (68 aa). The CP-type G domain maps to 155–294; sequence VSEVLDPPVA…VSFFLSYFIL (140 aa). 255–263 is a GTP binding site; sequence GPSGVGKSS.

It belongs to the TRAFAC class YlqF/YawG GTPase family.

The protein localises to the mitochondrion. This Arabidopsis thaliana (Mouse-ear cress) protein is Small ribosomal subunit biogenesis GTPase RsgA 2, mitochondrial.